An 86-amino-acid polypeptide reads, in one-letter code: Envelope glycoprotein N (86 aa).

The first 29 residues, 1–29, serve as a signal peptide directing secretion; the sequence is MTLYKIVSKPIILLAFFFTRVVFTNEVDG. The Virion surface segment spans residues 30–47; the sequence is EELFYKPTCHSDTYEIIL. A helical membrane pass occupies residues 48-68; the sequence is KKFSSIWILVNTFILLCSFSL. The Intravirion portion of the chain corresponds to 69–86; it reads FLKYWCFKTLAKETVKGY.

It belongs to the herpesviridae glycoprotein N family. Interacts (via N-terminus) with gM (via N-terminus). The gM-gN heterodimer forms the gCII complex.

It localises to the virion membrane. The protein resides in the host membrane. Its subcellular location is the host Golgi apparatus. It is found in the host trans-Golgi network. Envelope glycoprotein necessary for proper maturation of gM and modulation of its membrane fusion activity. Also plays a critical role in virion morphogenesis. This is Envelope glycoprotein N from Homo sapiens (Human).